A 530-amino-acid chain; its full sequence is Autoinducer-2 kinase (530 aa).

It belongs to the FGGY kinase family.

The protein resides in the cytoplasm. The catalysed reaction is (S)-4,5-dihydroxypentane-2,3-dione + ATP = (2S)-2-hydroxy-3,4-dioxopentyl phosphate + ADP + H(+). Catalyzes the phosphorylation of autoinducer-2 (AI-2) to phospho-AI-2, which subsequently inactivates the transcriptional regulator LsrR and leads to the transcription of the lsr operon. Phosphorylates the ring-open form of (S)-4,5-dihydroxypentane-2,3-dione (DPD), which is the precursor to all AI-2 signaling molecules, at the C5 position. The protein is Autoinducer-2 kinase of Enterobacter sp. (strain 638).